A 225-amino-acid polypeptide reads, in one-letter code: Phosphoserine phosphatase (225 aa).

Methionine 1 is subject to N-acetylmethionine. Catalysis depends on aspartate 20, which acts as the Nucleophile. 2 residues coordinate Mg(2+): aspartate 20 and aspartate 22. An L-serine-binding site is contributed by 20–22 (DVD). The Proton donor role is filled by aspartate 22. O-phospho-L-serine is bound at residue methionine 52. Glycine 53 contacts phosphate. L-serine contacts are provided by residues 109–111 (SGG) and lysine 158. O-phospho-L-serine contacts are provided by residues 109 to 111 (SGG) and lysine 158. Residue aspartate 179 participates in Mg(2+) binding. Threonine 182 lines the O-phospho-L-serine pocket. Threonine 182 serves as a coordination point for phosphate.

Belongs to the HAD-like hydrolase superfamily. SerB family. As to quaternary structure, homodimer. Mg(2+) serves as cofactor.

It is found in the cytoplasm. The protein resides in the cytosol. It catalyses the reaction O-phospho-L-serine + H2O = L-serine + phosphate. It carries out the reaction O-phospho-D-serine + H2O = D-serine + phosphate. The protein operates within amino-acid biosynthesis; L-serine biosynthesis; L-serine from 3-phospho-D-glycerate: step 3/3. Its activity is regulated as follows. Inhibited by calcium ions. Its function is as follows. Catalyzes the last irreversible step in the biosynthesis of L-serine from carbohydrates, the dephosphorylation of O-phospho-L-serine to L-serine. L-serine can then be used in protein synthesis, to produce other amino acids, in nucleotide metabolism or in glutathione synthesis, or can be racemized to D-serine, a neuromodulator. May also act on O-phospho-D-serine. This is Phosphoserine phosphatase from Homo sapiens (Human).